A 476-amino-acid chain; its full sequence is Thyroid receptor-interacting protein 6 (476 aa).

Pro residues predominate over residues 1-12; sequence MSGPTWLPPKQP. Disordered regions lie at residues 1–93 and 108–253; these read MSGP…PGSL and NGGR…QPPE. Arg-25 carries the asymmetric dimethylarginine; alternate modification. Residue Arg-25 is modified to Omega-N-methylarginine; alternate. Tyr-55 is modified (phosphotyrosine; by SRC). Ser-92 is modified (phosphoserine). Residue Arg-111 is modified to Omega-N-methylarginine. Position 142 is a phosphoserine (Ser-142). A compositionally biased stretch (low complexity) spans 152–167; the sequence is PTPASYTTASTPAGPA. 2 positions are modified to omega-N-methylarginine: Arg-179 and Arg-186. Position 189 is a phosphoserine (Ser-189). Residues Arg-205, Arg-236, and Arg-238 each carry the omega-N-methylarginine modification. Ser-249 carries the phosphoserine modification. LIM zinc-binding domains follow at residues 279–316, 339–398, and 399–467; these read CGGCGEDVVGDGAGVVALDRVFHVGCFVCSTCRAQLRG, CATC…FAPR, and CSVC…RIQE. Residues 469–476 are interaction with MAGI1 and PTPN13; the sequence is SATVTTDC.

This sequence belongs to the zyxin/ajuba family. Specifically interacts with the ligand binding domain of the thyroid receptor (TR) in the presence of thyroid hormone. Interacts (via the third LIM domain and C-terminus) with PTPN13 (via the second PDZ domain). Interacts (via the second LIM domain or via the third LIM domain plus C-terminus) with PDLIM4 (via PDZ domain). Found in a complex with PTPN13 and PDLIM4. Interacts with SVIL isoform 2. Interacts with LPAR2 but not other LPA receptors. Interacts with PRKAA2. Interacts with MAGI1. Interacts with SCRIB. In case of infection, interacts with S.typhimurium protein sseI. In terms of processing, phosphorylation at Tyr-55 by SRC is required for enhancement of lysophosphatidic acid-induced cell migration. Tyr-55 is dephosphorylated by PTPN13. In terms of tissue distribution, abundantly expressed in kidney, liver and lung. Lower levels in heart, placenta and pancreas. Expressed in colonic epithelial cells. Up-regulated in colonic tumors.

Its subcellular location is the cytoplasm. The protein localises to the cytoskeleton. The protein resides in the cell junction. It localises to the focal adhesion. It is found in the nucleus. Its function is as follows. Relays signals from the cell surface to the nucleus to weaken adherens junction and promote actin cytoskeleton reorganization and cell invasiveness. Involved in lysophosphatidic acid-induced cell adhesion and migration. Acts as a transcriptional coactivator for NF-kappa-B and JUN, and mediates the transrepression of these transcription factors induced by glucocorticoid receptor. This is Thyroid receptor-interacting protein 6 (TRIP6) from Homo sapiens (Human).